A 651-amino-acid polypeptide reads, in one-letter code: L-aspartate oxidase, chloroplastic (651 aa).

The transit peptide at 1-74 (MAAHVSTGNI…PISETSKPIR (74 aa)) directs the protein to the chloroplast. Residues 92 to 95 (SGVA), Lys-114, 121 to 128 (NTNYAQGG), and Asp-292 contribute to the FAD site. The Proton donor/acceptor role is filled by Arg-368. FAD contacts are provided by residues Glu-453 and 469–470 (SL).

The protein belongs to the FAD-dependent oxidoreductase 2 family. NadB subfamily. Interacts in vitro with QS. Requires FAD as cofactor.

Its subcellular location is the plastid. It is found in the chloroplast. The enzyme catalyses L-aspartate + O2 = iminosuccinate + H2O2. It participates in cofactor biosynthesis; NAD(+) biosynthesis; iminoaspartate from L-aspartate (oxidase route): step 1/1. In terms of biological role, catalyzes the oxidation of L-aspartate to iminoaspartate. Can complement nadB-deficient E.coli mutant. Plays a role in stomatal immunity. This is L-aspartate oxidase, chloroplastic from Arabidopsis thaliana (Mouse-ear cress).